The chain runs to 63 residues: Anionic peptide NDBP7 (63 aa).

The first 20 residues, 1–20, serve as a signal peptide directing secretion; the sequence is MISRFCLLFLLVFVVSKIQA.

This sequence belongs to the non-disulfide-bridged peptide (NDBP) superfamily. Long chain multifunctional peptide (group 2) family. Expressed by the venom gland.

The protein resides in the secreted. This Lychas mucronatus (Chinese swimming scorpion) protein is Anionic peptide NDBP7.